Here is a 436-residue protein sequence, read N- to C-terminus: Putative permease MJ0326 (436 aa).

12 helical membrane passes run 24–44 (LAGI…PQIL), 51–71 (FGAV…VMGL), 79–99 (LAPG…GMGI), 103–123 (VALG…LTKI), 139–159 (TAVG…GIIV), 171–191 (LMEP…ILVS), 194–214 (VIGA…ILGI), 235–255 (LDIM…FFFV), 322–342 (GFVS…YPVV), 345–365 (IPPY…MRSV), 381–401 (ITLL…LGFI), and 416–436 (VHWL…YLSG).

It belongs to the nucleobase:cation symporter-2 (NCS2) (TC 2.A.40) family. Azg-like subfamily.

It is found in the cell membrane. This chain is Putative permease MJ0326, found in Methanocaldococcus jannaschii (strain ATCC 43067 / DSM 2661 / JAL-1 / JCM 10045 / NBRC 100440) (Methanococcus jannaschii).